The following is a 548-amino-acid chain: Probable malate:quinone oxidoreductase (548 aa).

The interval 522–548 (KPQAADSTPKPQLKPKPVQKEVADIAL) is disordered. Positions 539–548 (VQKEVADIAL) are enriched in basic and acidic residues.

This sequence belongs to the MQO family. The cofactor is FAD.

The catalysed reaction is (S)-malate + a quinone = a quinol + oxaloacetate. Its pathway is carbohydrate metabolism; tricarboxylic acid cycle; oxaloacetate from (S)-malate (quinone route): step 1/1. The polypeptide is Probable malate:quinone oxidoreductase (Escherichia coli O9:H4 (strain HS)).